The sequence spans 463 residues: Cysteine--tRNA ligase (463 aa).

Zn(2+) is bound at residue Cys30. A 'HIGH' region motif is present at residues Met32–His42. The Zn(2+) site is built by Cys214, His239, and Glu243. The 'KMSKS' region signature appears at Lys271–Ser275. Lys274 is a binding site for ATP.

The protein belongs to the class-I aminoacyl-tRNA synthetase family. As to quaternary structure, monomer. It depends on Zn(2+) as a cofactor.

It is found in the cytoplasm. The catalysed reaction is tRNA(Cys) + L-cysteine + ATP = L-cysteinyl-tRNA(Cys) + AMP + diphosphate. In Ralstonia pickettii (strain 12J), this protein is Cysteine--tRNA ligase.